The sequence spans 124 residues: Small ribosomal subunit protein bS16 (124 aa).

Basic and acidic residues predominate over residues 84–110; the sequence is EKAERKNLKKGEPGKAAKERAEKRAAR. The disordered stretch occupies residues 84–124; sequence EKAERKNLKKGEPGKAAKERAEKRAAREAAANAPAEEAASE. Positions 111-124 are enriched in low complexity; it reads EAAANAPAEEAASE.

It belongs to the bacterial ribosomal protein bS16 family.

This is Small ribosomal subunit protein bS16 from Paracoccus denitrificans (strain Pd 1222).